Consider the following 306-residue polypeptide: Curved DNA-binding protein (306 aa).

The J domain occupies 5 to 69; it reads DYYAIMGVKP…QRRAEYDQMW (65 aa).

It localises to the cytoplasm. The protein resides in the nucleoid. In terms of biological role, DNA-binding protein that preferentially recognizes a curved DNA sequence. It is probably a functional analog of DnaJ; displays overlapping activities with DnaJ, but functions under different conditions, probably acting as a molecular chaperone in an adaptive response to environmental stresses other than heat shock. Lacks autonomous chaperone activity; binds native substrates and targets them for recognition by DnaK. Its activity is inhibited by the binding of CbpM. This Escherichia fergusonii (strain ATCC 35469 / DSM 13698 / CCUG 18766 / IAM 14443 / JCM 21226 / LMG 7866 / NBRC 102419 / NCTC 12128 / CDC 0568-73) protein is Curved DNA-binding protein.